A 438-amino-acid chain; its full sequence is Aspartate--tRNA(Asp/Asn) ligase (438 aa).

E176 provides a ligand contact to L-aspartate. Residues 198–201 are aspartate; that stretch reads QLYK. R220 contributes to the L-aspartate binding site. Residues 220 to 222, 228 to 230, and E361 contribute to the ATP site; these read RAE and RHL. Mg(2+) is bound by residues E361 and S364. Positions 364 and 368 each coordinate L-aspartate. 409–412 is an ATP binding site; it reads GADR.

The protein belongs to the class-II aminoacyl-tRNA synthetase family. Type 2 subfamily. As to quaternary structure, homodimer. The cofactor is Mg(2+).

It localises to the cytoplasm. It carries out the reaction tRNA(Asx) + L-aspartate + ATP = L-aspartyl-tRNA(Asx) + AMP + diphosphate. Its function is as follows. Aspartyl-tRNA synthetase with relaxed tRNA specificity since it is able to aspartylate not only its cognate tRNA(Asp) but also tRNA(Asn). Reaction proceeds in two steps: L-aspartate is first activated by ATP to form Asp-AMP and then transferred to the acceptor end of tRNA(Asp/Asn). This is Aspartate--tRNA(Asp/Asn) ligase from Methanocaldococcus jannaschii (strain ATCC 43067 / DSM 2661 / JAL-1 / JCM 10045 / NBRC 100440) (Methanococcus jannaschii).